The chain runs to 645 residues: Threonine--tRNA ligase (645 aa).

A TGS domain is found at 1-63 (MEQINIQFPD…ETDGSIEIVT (63 aa)). Residues 242-540 (DHRKIGKELE…LTEETKGAFP (299 aa)) form a catalytic region. Zn(2+) is bound by residues cysteine 336, histidine 387, and histidine 517.

Belongs to the class-II aminoacyl-tRNA synthetase family. In terms of assembly, homodimer. Zn(2+) is required as a cofactor.

Its subcellular location is the cytoplasm. It carries out the reaction tRNA(Thr) + L-threonine + ATP = L-threonyl-tRNA(Thr) + AMP + diphosphate + H(+). Functionally, catalyzes the attachment of threonine to tRNA(Thr) in a two-step reaction: L-threonine is first activated by ATP to form Thr-AMP and then transferred to the acceptor end of tRNA(Thr). Also edits incorrectly charged L-seryl-tRNA(Thr). This is Threonine--tRNA ligase from Staphylococcus aureus (strain JH1).